Consider the following 248-residue polypeptide: 4-hydroxy-tetrahydrodipicolinate reductase (248 aa).

Residues Asp-32, 74 to 76, and 99 to 102 contribute to the NAD(+) site; these read GTT and SANF. Residue His-134 is the Proton donor/acceptor of the active site. A (S)-2,3,4,5-tetrahydrodipicolinate-binding site is contributed by His-135. The Proton donor role is filled by Lys-138. Residue 144–145 participates in (S)-2,3,4,5-tetrahydrodipicolinate binding; that stretch reads GT.

It belongs to the DapB family.

It localises to the cytoplasm. It catalyses the reaction (S)-2,3,4,5-tetrahydrodipicolinate + NAD(+) + H2O = (2S,4S)-4-hydroxy-2,3,4,5-tetrahydrodipicolinate + NADH + H(+). The enzyme catalyses (S)-2,3,4,5-tetrahydrodipicolinate + NADP(+) + H2O = (2S,4S)-4-hydroxy-2,3,4,5-tetrahydrodipicolinate + NADPH + H(+). It participates in amino-acid biosynthesis; L-lysine biosynthesis via DAP pathway; (S)-tetrahydrodipicolinate from L-aspartate: step 4/4. In terms of biological role, catalyzes the conversion of 4-hydroxy-tetrahydrodipicolinate (HTPA) to tetrahydrodipicolinate. This is 4-hydroxy-tetrahydrodipicolinate reductase from Chlorobium luteolum (strain DSM 273 / BCRC 81028 / 2530) (Pelodictyon luteolum).